Here is a 435-residue protein sequence, read N- to C-terminus: 3-phosphoshikimate 1-carboxyvinyltransferase (435 aa).

Residues Lys-28, Ser-29, and Arg-33 each coordinate 3-phosphoshikimate. Lys-28 provides a ligand contact to phosphoenolpyruvate. Phosphoenolpyruvate is bound by residues Gly-100 and Arg-128. Ser-173, Gln-175, Asp-321, and Lys-348 together coordinate 3-phosphoshikimate. Gln-175 serves as a coordination point for phosphoenolpyruvate. The Proton acceptor role is filled by Asp-321. 2 residues coordinate phosphoenolpyruvate: Arg-352 and Arg-394.

Belongs to the EPSP synthase family. Monomer.

The protein localises to the cytoplasm. It carries out the reaction 3-phosphoshikimate + phosphoenolpyruvate = 5-O-(1-carboxyvinyl)-3-phosphoshikimate + phosphate. It functions in the pathway metabolic intermediate biosynthesis; chorismate biosynthesis; chorismate from D-erythrose 4-phosphate and phosphoenolpyruvate: step 6/7. In terms of biological role, catalyzes the transfer of the enolpyruvyl moiety of phosphoenolpyruvate (PEP) to the 5-hydroxyl of shikimate-3-phosphate (S3P) to produce enolpyruvyl shikimate-3-phosphate and inorganic phosphate. This Desulfitobacterium hafniense (strain DSM 10664 / DCB-2) protein is 3-phosphoshikimate 1-carboxyvinyltransferase.